A 125-amino-acid chain; its full sequence is Prefoldin subunit beta (125 aa).

The protein belongs to the prefoldin subunit beta family. In terms of assembly, heterohexamer of two alpha and four beta subunits.

The protein localises to the cytoplasm. Its function is as follows. Molecular chaperone capable of stabilizing a range of proteins. Seems to fulfill an ATP-independent, HSP70-like function in archaeal de novo protein folding. This Pyrobaculum calidifontis (strain DSM 21063 / JCM 11548 / VA1) protein is Prefoldin subunit beta.